Here is a 300-residue protein sequence, read N- to C-terminus: Cation-efflux pump FieF (300 aa).

The next 4 helical transmembrane spans lie at 12-32 (AAIA…FAWW), 39-59 (ILAA…NLLV), 82-102 (AALA…LTSI), and 114-134 (PGVG…LVTF). Residues Asp45 and Asp49 each contribute to the Zn(2+) site. Zn(2+)-binding residues include His153 and Asp157. 2 consecutive transmembrane segments (helical) span residues 156–176 (SDVM…YGWH) and 178–198 (ADAL…LRMG).

It belongs to the cation diffusion facilitator (CDF) transporter (TC 2.A.4) family. FieF subfamily. In terms of assembly, homodimer.

The protein localises to the cell inner membrane. It carries out the reaction Zn(2+)(in) + H(+)(out) = Zn(2+)(out) + H(+)(in). The catalysed reaction is Cd(2+)(in) + H(+)(out) = Cd(2+)(out) + H(+)(in). It catalyses the reaction Fe(2+)(in) + H(+)(out) = Fe(2+)(out) + H(+)(in). Its function is as follows. Divalent metal cation transporter which exports Zn(2+), Cd(2+) and possibly Fe(2+). May be involved in zinc and iron detoxification by efflux. The polypeptide is Cation-efflux pump FieF (Salmonella arizonae (strain ATCC BAA-731 / CDC346-86 / RSK2980)).